The chain runs to 285 residues: Chromatin modification-related protein YNG2 (285 aa).

The stretch at 19–54 (LEVKHLLQELKNKDVQLQEARKRYQTKDNQIHKFIR) forms a coiled coil. Polar residues predominate over residues 138–165 (NGLSDNLSGTTTPRGHSASTPVADNAAN). A disordered region spans residues 138–218 (NGLSDNLSGT…SRPNEGPGNN (81 aa)). Residues 193–207 (MKSEDFEDKKYDNDS) are compositionally biased toward basic and acidic residues. Residues 225–276 (NLYCFCQRVSFGEMIGCDNDDCKFEWFHWSCVGITAPPKDDEIWYCPDCAPK) form a PHD-type zinc finger. Zn(2+) contacts are provided by Cys-228, Cys-230, Cys-241, Cys-246, His-252, Cys-255, Cys-270, and Cys-273.

The protein belongs to the ING family. As to quaternary structure, interacts with H3K4me3 and to a lesser extent with H3K4me2. Component of the NuA4 histone acetyltransferase complex.

It localises to the nucleus. Its function is as follows. Component of the NuA4 histone acetyltransferase complex which is involved in transcriptional activation of selected genes principally by acetylation of nucleosomal histone H4 and H2A. The NuA4 complex is also involved in DNA repair. Involved in cell cycle progression and meiosis. This chain is Chromatin modification-related protein YNG2 (YNG2), found in Debaryomyces hansenii (strain ATCC 36239 / CBS 767 / BCRC 21394 / JCM 1990 / NBRC 0083 / IGC 2968) (Yeast).